A 110-amino-acid polypeptide reads, in one-letter code: Large ribosomal subunit protein uL22 (110 aa).

This sequence belongs to the universal ribosomal protein uL22 family. As to quaternary structure, part of the 50S ribosomal subunit.

In terms of biological role, this protein binds specifically to 23S rRNA; its binding is stimulated by other ribosomal proteins, e.g. L4, L17, and L20. It is important during the early stages of 50S assembly. It makes multiple contacts with different domains of the 23S rRNA in the assembled 50S subunit and ribosome. The globular domain of the protein is located near the polypeptide exit tunnel on the outside of the subunit, while an extended beta-hairpin is found that lines the wall of the exit tunnel in the center of the 70S ribosome. The chain is Large ribosomal subunit protein uL22 from Syntrophotalea carbinolica (strain DSM 2380 / NBRC 103641 / GraBd1) (Pelobacter carbinolicus).